The chain runs to 301 residues: Probable alpha-L-glutamate ligase 1 (301 aa).

The ATP-grasp domain maps to 104–287 (MQLMSRRGIG…VAGAIIAFIE (184 aa)). Residues K141, 178 to 179 (EY), D187, and 211 to 213 (RSN) contribute to the ATP site. Mg(2+)-binding residues include D248, E260, and N262. D248, E260, and N262 together coordinate Mn(2+).

Belongs to the RimK family. It depends on Mg(2+) as a cofactor. The cofactor is Mn(2+).

The polypeptide is Probable alpha-L-glutamate ligase 1 (Shewanella amazonensis (strain ATCC BAA-1098 / SB2B)).